Reading from the N-terminus, the 165-residue chain is Anaerobic nitrite reductase GLB1 (165 aa).

The Globin domain occupies 12 to 162; it reads VFGEEQEALV…LVAAIKREMK (151 aa). The short motif at 45-49 is the Homodimerization element; sequence EIAPS. Residues Ser-55, Lys-69, His-73, Arg-103, Thr-107, and His-108 each coordinate heme b. The Homodimerization signature appears at 115–127; that stretch reads DGHFEVTGFALLE.

The protein belongs to the plant globin family. Homodimer. Requires heme b as cofactor. In terms of tissue distribution, in embryonic organs and at low levels in vegetative organs.

The protein resides in the cytoplasm. It is found in the nucleus. It carries out the reaction Fe(III)-heme b-[protein] + nitric oxide + H2O = Fe(II)-heme b-[protein] + nitrite + 2 H(+). Phytoglobin that reduces nitrite to nitric oxide (NO) under anoxic conditions (e.g. during flooding or in waterlogged soil). May not function as an oxygen storage or transport protein. Has an unusually high affinity for O(2) through an hexacoordinate heme iron because of a very low dissociation constant. The protein is Anaerobic nitrite reductase GLB1 (HB) of Zea mays (Maize).